We begin with the raw amino-acid sequence, 485 residues long: NADH-quinone oxidoreductase subunit N (485 aa).

Transmembrane regions (helical) follow at residues 8-28 (LIALLPLLIVGLTVVVVMLSI), 35-55 (FLNATLSVIGLNAALVSLWFV), 71-91 (GFAMLYTGLVLLASLATCTFA), 105-125 (FYLLVLIAALGGILLANANHL), 127-147 (SLFLGIELISLPLFGLVGYAF), 159-179 (YTILSAAASSFLLFGMALVYA), 203-223 (LLAGFGLMIVGLGFKLSLVPF), 235-255 (PAPVSTFLATASKIAIFGVVM), 271-291 (VVLAIIAFASIIFGNLMALSQ), 297-317 (LLGYSSISHLGYLLVALIALQ), 326-346 (VGVYLAGYLFSSLGAFGVVSL), 373-393 (AAVMTVMMLSLAGIPMTLGFI), 408-430 (WWLVGAVVVGSAIGLYYYLRVAV), and 455-475 (IVVLISALLVLVLGIWPQPLI).

The protein belongs to the complex I subunit 2 family. As to quaternary structure, NDH-1 is composed of 13 different subunits. Subunits NuoA, H, J, K, L, M, N constitute the membrane sector of the complex.

It localises to the cell inner membrane. It catalyses the reaction a quinone + NADH + 5 H(+)(in) = a quinol + NAD(+) + 4 H(+)(out). Functionally, NDH-1 shuttles electrons from NADH, via FMN and iron-sulfur (Fe-S) centers, to quinones in the respiratory chain. The immediate electron acceptor for the enzyme in this species is believed to be ubiquinone. Couples the redox reaction to proton translocation (for every two electrons transferred, four hydrogen ions are translocated across the cytoplasmic membrane), and thus conserves the redox energy in a proton gradient. The sequence is that of NADH-quinone oxidoreductase subunit N from Escherichia coli O7:K1 (strain IAI39 / ExPEC).